Consider the following 355-residue polypeptide: 3-isopropylmalate dehydrogenase (355 aa).

Arg-90, Arg-100, Arg-128, and Asp-222 together coordinate substrate. Positions 222, 246, and 250 each coordinate Mg(2+). Gly-280 to Asn-292 contributes to the NAD(+) binding site.

Belongs to the isocitrate and isopropylmalate dehydrogenases family. LeuB type 1 subfamily. As to quaternary structure, homodimer. It depends on Mg(2+) as a cofactor. Requires Mn(2+) as cofactor.

It localises to the cytoplasm. The enzyme catalyses (2R,3S)-3-isopropylmalate + NAD(+) = 4-methyl-2-oxopentanoate + CO2 + NADH. It participates in amino-acid biosynthesis; L-leucine biosynthesis; L-leucine from 3-methyl-2-oxobutanoate: step 3/4. Its function is as follows. Catalyzes the oxidation of 3-carboxy-2-hydroxy-4-methylpentanoate (3-isopropylmalate) to 3-carboxy-4-methyl-2-oxopentanoate. The product decarboxylates to 4-methyl-2 oxopentanoate. The polypeptide is 3-isopropylmalate dehydrogenase (Burkholderia thailandensis (strain ATCC 700388 / DSM 13276 / CCUG 48851 / CIP 106301 / E264)).